A 126-amino-acid polypeptide reads, in one-letter code: Fatty acid-binding protein 10-A, liver basic (126 aa).

Positions 57, 77, 99, and 101 each coordinate cholate.

The protein belongs to the calycin superfamily. Fatty-acid binding protein (FABP) family. In terms of tissue distribution, expressed in the developing embryonic liver from 48 hpf. Also expressed in the liver of 5-day-old larvae. In adults, primarily expressed in the liver, with weak expression in the testis and intestine.

The protein localises to the cytoplasm. Binds hydrophobic ligands, such as cholate, in the cytoplasm. May be involved in intracellular lipid transport. Binds one cholate per subunit. The protein is Fatty acid-binding protein 10-A, liver basic (fabp10a) of Danio rerio (Zebrafish).